A 926-amino-acid polypeptide reads, in one-letter code: Alpha-aminoadipic semialdehyde synthase, mitochondrial (926 aa).

The N-terminal 27 residues, 1–27, are a transit peptide targeting the mitochondrion; it reads MLRAQRPRLARLRACLSRGLHHKPVMA. The lysine-ketoglutarate reductase stretch occupies residues 28-455; it reads LRREDVNAWE…DAVITSNGLL (428 aa). N6-acetyllysine is present on residues Lys-48, Lys-52, and Lys-56. An N6-acetyllysine; alternate modification is found at Lys-93. N6-succinyllysine; alternate is present on Lys-93. Lys-128 carries the N6-acetyllysine modification. N6-acetyllysine; alternate is present on Lys-138. Lys-138 is subject to N6-succinyllysine; alternate. The residue at position 274 (Lys-274) is an N6-succinyllysine. Lys-286 is modified (N6-acetyllysine; alternate). Position 286 is an N6-succinyllysine; alternate (Lys-286). Lys-333 carries the N6-succinyllysine modification. Lys-458 carries the N6-acetyllysine; alternate modification. Residue Lys-458 is modified to N6-succinyllysine; alternate. Residues 477-926 are saccharopine dehydrogenase; that stretch reads MSTKKKVLVL…VFNTQSTIKL (450 aa). Residues Ser-488, Asp-512, and Gln-516 each contribute to the NAD(+) site. N6-acetyllysine; alternate is present on residues Lys-523 and Lys-535. Lys-523 and Lys-535 each carry N6-succinyllysine; alternate. Residues Leu-554, Ala-576, and Ser-577 each contribute to the NAD(+) site. Residue 577 to 578 coordinates L-saccharopine; sequence SY. Lys-584 bears the N6-acetyllysine; alternate mark. An N6-succinyllysine; alternate modification is found at Lys-584. Residues Leu-603, Asp-604, and Pro-605 each contribute to the NAD(+) site. Asp-604 contacts L-saccharopine. Arg-703 is a binding site for L-saccharopine. Lys-707 is modified (N6-acetyllysine). 724-726 lines the L-saccharopine pocket; sequence TLR. An N6-succinyllysine modification is found at Lys-732. Residue Lys-739 is modified to N6-acetyllysine. Lys-761 carries the post-translational modification N6-acetyllysine; alternate. N6-succinyllysine; alternate is present on Lys-761. N6-acetyllysine occurs at positions 778 and 780.

The protein in the N-terminal section; belongs to the AlaDH/PNT family. This sequence in the C-terminal section; belongs to the saccharopine dehydrogenase family. As to quaternary structure, homotetramer. As to expression, highly expressed in kidney and liver, very low expression is seen in heart, brain, spleen, lung, skeletal muscle and testis.

The protein resides in the mitochondrion. The enzyme catalyses L-saccharopine + NADP(+) + H2O = L-lysine + 2-oxoglutarate + NADPH + H(+). It carries out the reaction L-saccharopine + NAD(+) + H2O = (S)-2-amino-6-oxohexanoate + L-glutamate + NADH + H(+). The protein operates within amino-acid degradation; L-lysine degradation via saccharopine pathway; glutaryl-CoA from L-lysine: step 1/6. Its pathway is amino-acid degradation; L-lysine degradation via saccharopine pathway; glutaryl-CoA from L-lysine: step 2/6. Functionally, bifunctional enzyme that catalyzes the first two steps in lysine degradation. The chain is Alpha-aminoadipic semialdehyde synthase, mitochondrial from Mus musculus (Mouse).